The sequence spans 152 residues: Avidin (152 aa).

Residues 1–24 (MVHATSPLLLLLLLSLALVAPGLS) form the signal peptide. Residues 26 to 149 (RKCSLTGKWT…GINIFTRLRT (124 aa)) form the Avidin-like domain. Cysteines 28 and 107 form a disulfide. Residue Asn41 is glycosylated (N-linked (GlcNAc...) asparagine). A biotin-binding site is contributed by Tyr57.

This sequence belongs to the avidin/streptavidin family. In terms of assembly, homotetramer. Post-translationally, N-linked glycan at Asn-41 consists of GlcNAc(beta1-2)Man(alpha1-3)[GlcNAc(beta1-4)][Man(alpha1-?)Man(alpha1-6)] Man(beta1-4)GlcNAc(beta1-4)GlcNAc. Synthesized in hen oviduct and concentrated in egg white (where it represents 0.05% of the total protein).

The protein resides in the secreted. Functionally, the biological function of avidin is not known. Forms a strong non-covalent specific complex with biotin (one molecule of biotin per subunit of avidin). This Gallus gallus (Chicken) protein is Avidin (AVD).